The chain runs to 228 residues: uncharacterized protein (228 aa).

A signal peptide spans 1 to 16 (MILLLLALISATTAFQ). Residues 206 to 225 (LFQTLFFVTLSFLVGSAFAL) traverse the membrane as a helical segment.

It to A.fulgidus AF_1225.

The protein localises to the membrane. This is an uncharacterized protein from Archaeoglobus fulgidus (strain ATCC 49558 / DSM 4304 / JCM 9628 / NBRC 100126 / VC-16).